We begin with the raw amino-acid sequence, 581 residues long: Arginine--tRNA ligase (581 aa).

The short motif at 126 to 136 (PNLAKEMHVGH) is the 'HIGH' region element.

It belongs to the class-I aminoacyl-tRNA synthetase family. As to quaternary structure, monomer.

The protein resides in the cytoplasm. It catalyses the reaction tRNA(Arg) + L-arginine + ATP = L-arginyl-tRNA(Arg) + AMP + diphosphate. The chain is Arginine--tRNA ligase from Shewanella loihica (strain ATCC BAA-1088 / PV-4).